A 69-amino-acid chain; its full sequence is MTFYNYLMRHRAPVEKDDATRLANLVFQDPLFPKQSKDFDEISTYLETQAPFYFNLTLFDNIWESYLEA.

This sequence belongs to the UPF0346 family.

This Lactococcus lactis subsp. lactis (strain IL1403) (Streptococcus lactis) protein is UPF0346 protein YuiB (yuiB).